The sequence spans 100 residues: Urease subunit gamma (100 aa).

This sequence belongs to the urease gamma subunit family. As to quaternary structure, heterotrimer of UreA (gamma), UreB (beta) and UreC (alpha) subunits. Three heterotrimers associate to form the active enzyme.

Its subcellular location is the cytoplasm. The catalysed reaction is urea + 2 H2O + H(+) = hydrogencarbonate + 2 NH4(+). It participates in nitrogen metabolism; urea degradation; CO(2) and NH(3) from urea (urease route): step 1/1. The sequence is that of Urease subunit gamma from Rhizobium etli (strain CIAT 652).